The sequence spans 114 residues: Fumarate reductase subunit D (114 aa).

The next 3 membrane-spanning stretches (helical) occupy residues 24–44 (ISALAFPVLILILGILLPLGI), 49–69 (GIIAFAHHWFGKLVILVLTIF), and 94–114 (LIFYGLAVLYTVVAIWGVASI).

It belongs to the FrdD family. As to quaternary structure, part of an enzyme complex containing four subunits: a flavoprotein (FrdA), an iron-sulfur protein (FrdB), and two hydrophobic anchor proteins (FrdC and FrdD).

Its subcellular location is the cell inner membrane. Its function is as follows. Anchors the catalytic components of the fumarate reductase complex to the cell membrane, binds quinones. The sequence is that of Fumarate reductase subunit D from Actinobacillus succinogenes (strain ATCC 55618 / DSM 22257 / CCUG 43843 / 130Z).